The sequence spans 629 residues: 1-deoxy-D-xylulose-5-phosphate synthase (629 aa).

Residues His-72 and 113-115 (GHS) contribute to the thiamine diphosphate site. Asp-144 provides a ligand contact to Mg(2+). Thiamine diphosphate-binding positions include 145 to 146 (GA), Asn-173, Tyr-284, and Glu-366. Asn-173 is a binding site for Mg(2+).

The protein belongs to the transketolase family. DXPS subfamily. In terms of assembly, homodimer. Mg(2+) is required as a cofactor. Thiamine diphosphate serves as cofactor.

It catalyses the reaction D-glyceraldehyde 3-phosphate + pyruvate + H(+) = 1-deoxy-D-xylulose 5-phosphate + CO2. It participates in metabolic intermediate biosynthesis; 1-deoxy-D-xylulose 5-phosphate biosynthesis; 1-deoxy-D-xylulose 5-phosphate from D-glyceraldehyde 3-phosphate and pyruvate: step 1/1. In terms of biological role, catalyzes the acyloin condensation reaction between C atoms 2 and 3 of pyruvate and glyceraldehyde 3-phosphate to yield 1-deoxy-D-xylulose-5-phosphate (DXP). This is 1-deoxy-D-xylulose-5-phosphate synthase from Halalkalibacterium halodurans (strain ATCC BAA-125 / DSM 18197 / FERM 7344 / JCM 9153 / C-125) (Bacillus halodurans).